The primary structure comprises 158 residues: Small ribosomal subunit protein uS15 (158 aa).

The span at 1 to 18 shows a compositional bias: basic residues; that stretch reads MARMHARKRGKSGSKRPP. The interval 1-21 is disordered; sequence MARMHARKRGKSGSKRPPRTA.

The protein belongs to the universal ribosomal protein uS15 family. As to quaternary structure, part of the 30S ribosomal subunit.

The polypeptide is Small ribosomal subunit protein uS15 (Pyrococcus abyssi (strain GE5 / Orsay)).